We begin with the raw amino-acid sequence, 343 residues long: Methionine import ATP-binding protein MetN 1 (343 aa).

In terms of domain architecture, ABC transporter spans 2 to 241 (IKLSNITKVF…PKTPLAQKFI (240 aa)). 38 to 45 (GASGAGKS) provides a ligand contact to ATP.

The protein belongs to the ABC transporter superfamily. Methionine importer (TC 3.A.1.24) family. The complex is composed of two ATP-binding proteins (MetN), two transmembrane proteins (MetI) and a solute-binding protein (MetQ).

It localises to the cell inner membrane. It catalyses the reaction L-methionine(out) + ATP + H2O = L-methionine(in) + ADP + phosphate + H(+). It carries out the reaction D-methionine(out) + ATP + H2O = D-methionine(in) + ADP + phosphate + H(+). Its function is as follows. Part of the ABC transporter complex MetNIQ involved in methionine import. Responsible for energy coupling to the transport system. The protein is Methionine import ATP-binding protein MetN 1 of Salmonella choleraesuis (strain SC-B67).